We begin with the raw amino-acid sequence, 319 residues long: tRNA dimethylallyltransferase (319 aa).

Residue 15 to 22 participates in ATP binding; that stretch reads GPTASGKS. 17–22 is a substrate binding site; sequence TASGKS. Interaction with substrate tRNA regions lie at residues 40–43 and 164–168; these read DSRQ and QRLVR.

Belongs to the IPP transferase family. Monomer. Mg(2+) serves as cofactor.

It carries out the reaction adenosine(37) in tRNA + dimethylallyl diphosphate = N(6)-dimethylallyladenosine(37) in tRNA + diphosphate. In terms of biological role, catalyzes the transfer of a dimethylallyl group onto the adenine at position 37 in tRNAs that read codons beginning with uridine, leading to the formation of N6-(dimethylallyl)adenosine (i(6)A). The sequence is that of tRNA dimethylallyltransferase from Chlorobium phaeobacteroides (strain DSM 266 / SMG 266 / 2430).